The sequence spans 367 residues: MTDEPLTDRPPAVDLGRLLIDAHAESDEHAVEAALRPRRLDEFVGQQRVRDQLSLILDGAKQRGRPPDHILLSGPPGLGKTTLAMIVAAELNTPIRVTSGPAIQHAGDLAAVLTQLSEGEVLFLDEIHRMARPAEEMLYLAMEDFRVDVVVGKGPGASVIPLELAPFTLIGATTRTGLLPGPLRDRFGFTARLDFYEPADLERIVHRSARLLDVRITPDGAAEIARRSRGTPRIANRLLRRVRDYAEVRADGVITCEVAQAALAVYEVDEHGLDRLDRAVLDALVRRFGGGPVGLGTVAVAVGEEPETVEEVAEPFLFRAGFLIRTPRGRMATAAAWRHLGITPPPEALGAAQLAFEIDRDAGEPTA.

The large ATPase domain (RuvB-L) stretch occupies residues 2-196; the sequence is TDEPLTDRPP…FGFTARLDFY (195 aa). ATP contacts are provided by residues Leu35, Arg36, Gly77, Lys80, Thr81, Thr82, 143–145, Arg186, Tyr196, and Arg233; that span reads EDF. Thr81 serves as a coordination point for Mg(2+). The small ATPAse domain (RuvB-S) stretch occupies residues 197 to 267; sequence EPADLERIVH…VAQAALAVYE (71 aa). The head domain (RuvB-H) stretch occupies residues 270-367; that stretch reads EHGLDRLDRA…IDRDAGEPTA (98 aa). Residues Arg325 and Arg330 each contribute to the DNA site.

The protein belongs to the RuvB family. As to quaternary structure, homohexamer. Forms an RuvA(8)-RuvB(12)-Holliday junction (HJ) complex. HJ DNA is sandwiched between 2 RuvA tetramers; dsDNA enters through RuvA and exits via RuvB. An RuvB hexamer assembles on each DNA strand where it exits the tetramer. Each RuvB hexamer is contacted by two RuvA subunits (via domain III) on 2 adjacent RuvB subunits; this complex drives branch migration. In the full resolvosome a probable DNA-RuvA(4)-RuvB(12)-RuvC(2) complex forms which resolves the HJ.

It localises to the cytoplasm. It catalyses the reaction ATP + H2O = ADP + phosphate + H(+). The RuvA-RuvB-RuvC complex processes Holliday junction (HJ) DNA during genetic recombination and DNA repair, while the RuvA-RuvB complex plays an important role in the rescue of blocked DNA replication forks via replication fork reversal (RFR). RuvA specifically binds to HJ cruciform DNA, conferring on it an open structure. The RuvB hexamer acts as an ATP-dependent pump, pulling dsDNA into and through the RuvAB complex. RuvB forms 2 homohexamers on either side of HJ DNA bound by 1 or 2 RuvA tetramers; 4 subunits per hexamer contact DNA at a time. Coordinated motions by a converter formed by DNA-disengaged RuvB subunits stimulates ATP hydrolysis and nucleotide exchange. Immobilization of the converter enables RuvB to convert the ATP-contained energy into a lever motion, pulling 2 nucleotides of DNA out of the RuvA tetramer per ATP hydrolyzed, thus driving DNA branch migration. The RuvB motors rotate together with the DNA substrate, which together with the progressing nucleotide cycle form the mechanistic basis for DNA recombination by continuous HJ branch migration. Branch migration allows RuvC to scan DNA until it finds its consensus sequence, where it cleaves and resolves cruciform DNA. This is Holliday junction branch migration complex subunit RuvB from Acidothermus cellulolyticus (strain ATCC 43068 / DSM 8971 / 11B).